A 748-amino-acid chain; its full sequence is Polyribonucleotide nucleotidyltransferase (748 aa).

Asp-522 and Asp-528 together coordinate Mg(2+). The region spanning 588-647 (PRVTTIRVPVDKIGEVIGPKGKIINAITEETGAQISIEDDGTVFVGATDGPSAQAAIDRI) is the KH domain. Positions 659-728 (GERFLGTVVK…KRGKISLVLV (70 aa)) constitute an S1 motif domain.

It belongs to the polyribonucleotide nucleotidyltransferase family. It depends on Mg(2+) as a cofactor.

The protein resides in the cytoplasm. It catalyses the reaction RNA(n+1) + phosphate = RNA(n) + a ribonucleoside 5'-diphosphate. Functionally, involved in mRNA degradation. Catalyzes the phosphorolysis of single-stranded polyribonucleotides processively in the 3'- to 5'-direction. The protein is Polyribonucleotide nucleotidyltransferase of Mycobacterium avium (strain 104).